The following is a 129-amino-acid chain: Protein GLUTAMINE DUMPER 2 (129 aa).

At 1 to 34 (MQTMEGRQYNYQDSINASSSMVVPHSPWHSPVPY) the chain is on the extracellular side. The chain crosses the membrane as a helical span at residues 35–55 (LFGGLAAMLALICVALLILAC). Residues 56–129 (SYWRLSGSAE…DHNEEEGRRG (74 aa)) are Cytoplasmic-facing. The disordered stretch occupies residues 66 to 89 (RDLEAGDDAKPDNDTNKTKHTEMP). Positions 94–98 (VIMAG) match the VIMAG motif. Positions 106-129 (ATPATRSEQSCTCGDHNEEEGRRG) are disordered. Positions 120 to 129 (DHNEEEGRRG) are enriched in basic and acidic residues.

The protein belongs to the GLUTAMINE DUMPER 1 (TC 9.B.60) family. In terms of tissue distribution, expressed in the vascular tissues.

Its subcellular location is the membrane. Probable subunit of an amino acid transporter involved in the regulation of the amino acid metabolism. Stimulates amino acid export by activating nonselective amino acid facilitators. The protein is Protein GLUTAMINE DUMPER 2 (GDU2) of Arabidopsis thaliana (Mouse-ear cress).